Reading from the N-terminus, the 2185-residue chain is Genome polyprotein (2185 aa).

A lipid anchor (N-myristoyl glycine; by host) is attached at G2. Topologically, residues 2–1495 (GAQVSTQKTG…HVSRAFICLQ (1494 aa)) are cytoplasmic. Residues 568 to 584 (FFQGPVEDAITAAIGRV) are amphipathic alpha-helix. Catalysis depends on for protease 2A activity residues H872 and D890. 2 residues coordinate Zn(2+): C907 and C909. C961 functions as the For protease 2A activity in the catalytic mechanism. Residues C967 and H969 each contribute to the Zn(2+) site. Residues 1101–1173 (NNGWLKKFTE…EQSAPSQSDQ (73 aa)) form a membrane-binding region. The tract at residues 1101 to 1239 (NNGWLKKFTE…SPGAGKSVAT (139 aa)) is oligomerization. Residues 1122 to 1126 (AIKIQ) form an RNA-binding region. The region spanning 1205-1361 (EKKMSNYIQF…SMYSQNGKIN (157 aa)) is the SF3 helicase domain. Zn(2+) contacts are provided by C1369, C1381, and C1386. The segment at 1369–1386 (CDEECCPVNFKKCCPLVC) adopts a C4-type; degenerate zinc-finger fold. An RNA-binding region spans residues 1413 to 1420 (EYNHRHSV). The tract at residues 1424-1429 (LEALFQ) is oligomerization. The stretch at 1496–1511 (AITTFVSVAGIIYIIY) is an intramembrane region. Topologically, residues 1512-2185 (KLFAGFQGAY…TIRRKWLDSF (674 aa)) are cytoplasmic. At Y1521 the chain carries O-(5'-phospho-RNA)-tyrosine. In terms of domain architecture, Peptidase C3 spans 1541 to 1719 (GPAFEFAVAM…FSAALLKHYF (179 aa)). Active-site for protease 3C activity residues include H1580, E1611, and C1687. Residues 1950-2066 (GHLIAFDYSG…SYPWPIDASL (117 aa)) form the RdRp catalytic domain. Positions 1956 and 2052 each coordinate Mg(2+).

Belongs to the picornaviruses polyprotein family. As to quaternary structure, interacts with capsid protein VP1 and capsid protein VP3 to form heterotrimeric protomers. Interacts with capsid protein VP0, and capsid protein VP3 to form heterotrimeric protomers. Five protomers subsequently associate to form pentamers which serve as building blocks for the capsid. Interacts with capsid protein VP2, capsid protein VP3 and capsid protein VP4 following cleavage of capsid protein VP0. Interacts with host CD55. Interacts with host CXADR. In terms of assembly, interacts with capsid protein VP1 and capsid protein VP3 in the mature capsid. As to quaternary structure, interacts with capsid protein VP0 and capsid protein VP1 to form heterotrimeric protomers. Five protomers subsequently associate to form pentamers which serve as building blocks for the capsid. Interacts with capsid protein VP4 in the mature capsid. Interacts with protein 2C; this interaction may be important for virion morphogenesis. Interacts with capsid protein VP1 and capsid protein VP3. In terms of assembly, homodimer. As to quaternary structure, homohexamer; forms a hexameric ring structure with 6-fold symmetry characteristic of AAA+ ATPases. Interacts (via N-terminus) with host RTN3 (via reticulon domain); this interaction is important for viral replication. Interacts with capsid protein VP3; this interaction may be important for virion morphogenesis. Interacts with protein 3CD. In terms of assembly, homodimer. Interacts with host GBF1. Interacts (via GOLD domain) with host ACBD3 (via GOLD domain); this interaction allows the formation of a viral protein 3A/ACBD3 heterotetramer with a 2:2 stoichiometry, which will stimulate the recruitment of host PI4KB in order to synthesize PI4P at the viral RNA replication sites. As to quaternary structure, interacts with RNA-directed RNA polymerase. Interacts with host TICAM1 (via C-terminus). In terms of assembly, interacts with protein 3AB and with RNA-directed RNA polymerase. As to quaternary structure, interacts with Viral protein genome-linked and with protein 3CD. Requires Mg(2+) as cofactor. Specific enzymatic cleavages in vivo by the viral proteases yield processing intermediates and the mature proteins. In terms of processing, myristoylation is required for the formation of pentamers during virus assembly. Further assembly of 12 pentamers and a molecule of genomic RNA generates the provirion. Post-translationally, during virion maturation, immature virions are rendered infectious following cleavage of VP0 into VP4 and VP2. This maturation seems to be an autocatalytic event triggered by the presence of RNA in the capsid and it is followed by a conformational change infectious virion. Myristoylation is required during RNA encapsidation and formation of the mature virus particle. In terms of processing, VPg is uridylylated by the polymerase into VPg-pUpU. This acts as a nucleotide-peptide primer for the genomic RNA replication.

It is found in the virion. The protein localises to the host cytoplasm. Its subcellular location is the host cytoplasmic vesicle membrane. It localises to the host nucleus. The enzyme catalyses a ribonucleoside 5'-triphosphate + H2O = a ribonucleoside 5'-diphosphate + phosphate + H(+). It carries out the reaction Selective cleavage of Tyr-|-Gly bond in the picornavirus polyprotein.. It catalyses the reaction RNA(n) + a ribonucleoside 5'-triphosphate = RNA(n+1) + diphosphate. The catalysed reaction is Selective cleavage of Gln-|-Gly bond in the poliovirus polyprotein. In other picornavirus reactions Glu may be substituted for Gln, and Ser or Thr for Gly.. Its activity is regulated as follows. Replication or transcription is subject to high level of random mutations by the nucleotide analog ribavirin. Its function is as follows. Forms an icosahedral capsid of pseudo T=3 symmetry with capsid proteins VP2 and VP3. The capsid is 300 Angstroms in diameter, composed of 60 copies of each capsid protein and enclosing the viral positive strand RNA genome. Capsid protein VP1 mainly forms the vertices of the capsid. Capsid protein VP1 interacts with host cell receptors CD55 and CXADR to provide virion attachment to target host cells. This attachment induces virion internalization. Tyrosine kinases are probably involved in the entry process. After binding to its receptor, the capsid undergoes conformational changes. Capsid protein VP1 N-terminus (that contains an amphipathic alpha-helix) and capsid protein VP4 are externalized. Together, they shape a pore in the host membrane through which viral genome is translocated to host cell cytoplasm. Functionally, forms an icosahedral capsid of pseudo T=3 symmetry with capsid proteins VP2 and VP3. The capsid is 300 Angstroms in diameter, composed of 60 copies of each capsid protein and enclosing the viral positive strand RNA genome. In terms of biological role, lies on the inner surface of the capsid shell. After binding to the host receptor, the capsid undergoes conformational changes. Capsid protein VP4 is released, Capsid protein VP1 N-terminus is externalized, and together, they shape a pore in the host membrane through which the viral genome is translocated into the host cell cytoplasm. Component of immature procapsids, which is cleaved into capsid proteins VP4 and VP2 after maturation. Allows the capsid to remain inactive before the maturation step. Its function is as follows. Cysteine protease that cleaves viral polyprotein and specific host proteins. It is responsible for the autocatalytic cleavage between the P1 and P2 regions, which is the first cleavage occurring in the polyprotein. Also cleaves the host translation initiation factor EIF4G1, in order to shut down the capped cellular mRNA translation. Inhibits the host nucleus-cytoplasm protein and RNA trafficking by cleaving host members of the nuclear pores. Counteracts stress granule formation probably by antagonizing its assembly or promoting its dissassembly. Cleaves and inhibits host IFIH1/MDA5, thereby inhibiting the type-I IFN production and the establishment of the antiviral state. Cleaves and inhibits host MAVS, thereby inhibiting the type-I IFN production and the establishment of the antiviral state. Functionally, plays an essential role in the virus replication cycle by acting as a viroporin. Creates a pore in the host endoplasmic reticulum and as a consequence releases Ca2+ in the cytoplasm of infected cell. In turn, high levels of cytoplasmic calcium may trigger membrane trafficking and transport of viral ER-associated proteins to viroplasms, sites of viral genome replication. In terms of biological role, induces and associates with structural rearrangements of intracellular membranes. Displays RNA-binding, nucleotide binding and NTPase activities. May play a role in virion morphogenesis and viral RNA encapsidation by interacting with the capsid protein VP3. Localizes the viral replication complex to the surface of membranous vesicles. Together with protein 3CD binds the Cis-Active RNA Element (CRE) which is involved in RNA synthesis initiation. Acts as a cofactor to stimulate the activity of 3D polymerase, maybe through a nucleid acid chaperone activity. Its function is as follows. Localizes the viral replication complex to the surface of membranous vesicles. It inhibits host cell endoplasmic reticulum-to-Golgi apparatus transport and causes the disassembly of the Golgi complex, possibly through GBF1 interaction. This would result in depletion of MHC, trail receptors and IFN receptors at the host cell surface. Plays an essential role in viral RNA replication by recruiting ACBD3 and PI4KB at the viral replication sites, thereby allowing the formation of the rearranged membranous structures where viral replication takes place. Functionally, acts as a primer for viral RNA replication and remains covalently bound to viral genomic RNA. VPg is uridylylated prior to priming replication into VPg-pUpU. The oriI viral genomic sequence may act as a template for this. The VPg-pUpU is then used as primer on the genomic RNA poly(A) by the RNA-dependent RNA polymerase to replicate the viral genome. During genome replication, the VPg-RNA linkage is removed by the host TDP2, thereby accelerating replication. During the late stage of the replication cycle, host TDP2 is excluded from sites of viral RNA synthesis and encapsidation, allowing for the generation of progeny virions. In terms of biological role, involved in the viral replication complex and viral polypeptide maturation. It exhibits protease activity with a specificity and catalytic efficiency that is different from protease 3C. Protein 3CD lacks polymerase activity. Protein 3CD binds to the 5'UTR of the viral genome. Major viral protease that mediates proteolytic processing of the polyprotein. Cleaves host EIF5B, contributing to host translation shutoff. Also cleaves host PABPC1, contributing to host translation shutoff. Cleaves and inhibits host RIGI, thereby inhibiting the type-I IFN production and the establishment of the antiviral state. Cleaves and inhibits host MAVS, thereby inhibiting the type-I IFN production and the establishment of the antiviral state. Cleaves and inhibits host TICAM1/TRIF, thereby inhibiting the type-I IFN production. Cleaves host NLRP1, triggers host N-glycine-mediated degradation of the autoinhibitory NLRP1 N-terminal fragment. Its function is as follows. Replicates the viral genomic RNA on the surface of intracellular membranes. May form linear arrays of subunits that propagate along a strong head-to-tail interaction called interface-I. Covalently attaches UMP to a tyrosine of VPg, which is used to prime RNA synthesis. The positive stranded RNA genome is first replicated at virus induced membranous vesicles, creating a dsRNA genomic replication form. This dsRNA is then used as template to synthesize positive stranded RNA genomes. ss(+)RNA genomes are either translated, replicated or encapsidated. This Homo sapiens (Human) protein is Genome polyprotein.